The primary structure comprises 415 residues: NAD-dependent protein deacetylase hst4 (415 aa).

Positions 1 to 26 are disordered; that stretch reads MKVEEHVPLIQESRKRKCQSSENASK. The 298-residue stretch at 40–337 folds into the Deacetylase sirtuin-type domain; it reads TGNENVDLSP…RRLKPLLDAP (298 aa). Residues 65-84 and 153-156 contribute to the NAD(+) site; these read GAGI…EGLF and QNID. Catalysis depends on His184, which acts as the Proton acceptor. Zn(2+) contacts are provided by Cys192, Cys195, Cys214, and Cys217. NAD(+) contacts are provided by residues 273 to 275, 303 to 305, and Leu323; these read GTS and NYD.

This sequence belongs to the sirtuin family. Class I subfamily. Zn(2+) is required as a cofactor.

The protein localises to the nucleus. The protein resides in the nucleolus. It catalyses the reaction N(6)-acetyl-L-lysyl-[protein] + NAD(+) + H2O = 2''-O-acetyl-ADP-D-ribose + nicotinamide + L-lysyl-[protein]. NAD-dependent histone deacetylase, which contributes to both telomeric and centromeric silencing, proper cell cycle progression, DNA damage control, recombination, and genomic maintenance. The polypeptide is NAD-dependent protein deacetylase hst4 (hst4) (Schizosaccharomyces pombe (strain 972 / ATCC 24843) (Fission yeast)).